Here is a 295-residue protein sequence, read N- to C-terminus: Urease accessory protein UreD (295 aa).

This sequence belongs to the UreD family. In terms of assembly, ureD, UreF and UreG form a complex that acts as a GTP-hydrolysis-dependent molecular chaperone, activating the urease apoprotein by helping to assemble the nickel containing metallocenter of UreC. The UreE protein probably delivers the nickel.

It localises to the cytoplasm. In terms of biological role, required for maturation of urease via the functional incorporation of the urease nickel metallocenter. This chain is Urease accessory protein UreD, found in Saccharophagus degradans (strain 2-40 / ATCC 43961 / DSM 17024).